The sequence spans 351 residues: Translation initiation factor eIF2B subunit beta (351 aa).

The protein belongs to the eIF-2B alpha/beta/delta subunits family. Component of the translation initiation factor 2B (eIF2B) complex which is a heterodecamer of two sets of five different subunits: alpha, beta, gamma, delta and epsilon. Subunits alpha, beta and delta comprise a regulatory subcomplex and subunits epsilon and gamma comprise a catalytic subcomplex. Within the complex, the hexameric regulatory complex resides at the center, with the two heterodimeric catalytic subcomplexes bound on opposite sides.

The protein resides in the cytoplasm. It is found in the cytosol. Its activity is regulated as follows. Activated by the chemical integrated stress response (ISR) inhibitor ISRIB which stimulates guanine nucleotide exchange factor activity for both phosphorylated and unphosphorylated eIF2. In terms of biological role, acts as a component of the translation initiation factor 2B (eIF2B) complex, which catalyzes the exchange of GDP for GTP on eukaryotic initiation factor 2 (eIF2) gamma subunit. Its guanine nucleotide exchange factor activity is repressed when bound to eIF2 complex phosphorylated on the alpha subunit, thereby limiting the amount of methionyl-initiator methionine tRNA available to the ribosome and consequently global translation is repressed. The chain is Translation initiation factor eIF2B subunit beta (Eif2b2) from Rattus norvegicus (Rat).